A 1381-amino-acid polypeptide reads, in one-letter code: Major capsid protein (1381 aa).

This sequence belongs to the herpesviridae major capsid protein family. As to quaternary structure, homomultimer. Makes the hexons and eleven out of twelve pentons. Interacts with triplex proteins 1/TRX1 and 2/TRX2; adjacent capsomers are linked together in groups of three by triplexes, heterotrimeric complexes composed of one molecule of TRX1 and two molecules of TRX2. Interacts with scaffold protein; this interaction allows efficient MCP transport to the host nucleus. Interacts with capsid vertex component 2/CVC2. Interacts with the small capsomere-interacting protein/SCP.

Its subcellular location is the virion. It localises to the host nucleus. Its function is as follows. Self-assembles to form an icosahedral capsid with a T=16 symmetry, about 200 nm in diameter, and consisting of 150 hexons and 12 pentons (total of 162 capsomers). Hexons form the edges and faces of the capsid and are each composed of six MCP molecules. In contrast, one penton is found at each of the 12 vertices. Eleven of the pentons are MCP pentamers, while the last vertex is occupied by the portal complex. The capsid is surrounded by a layer of proteinaceous material designated the tegument which, in turn, is enclosed in an envelope of host cell-derived lipids containing virus-encoded glycoproteins. The chain is Major capsid protein from Epstein-Barr virus (strain AG876) (HHV-4).